The following is a 144-amino-acid chain: Universal stress protein A (144 aa).

The protein belongs to the universal stress protein A family. In terms of assembly, homodimer.

The protein resides in the cytoplasm. Its function is as follows. Required for resistance to DNA-damaging agents. This is Universal stress protein A (uspA) from Escherichia coli O6:H1 (strain CFT073 / ATCC 700928 / UPEC).